Here is a 401-residue protein sequence, read N- to C-terminus: Ribosomal protein uS12 methylthiotransferase RimO (401 aa).

The 108-residue stretch at 1-108 (MKINFINLGC…GIELLQTPKR (108 aa)) folds into the MTTase N-terminal domain. [4Fe-4S] cluster-binding residues include cysteine 10, cysteine 43, cysteine 72, cysteine 124, cysteine 128, and cysteine 131. In terms of domain architecture, Radical SAM core spans 110–339 (LTTKHYAYLK…FNLSQEILEE (230 aa)).

Belongs to the methylthiotransferase family. RimO subfamily. The cofactor is [4Fe-4S] cluster.

Its subcellular location is the cytoplasm. It catalyses the reaction L-aspartate(89)-[ribosomal protein uS12]-hydrogen + (sulfur carrier)-SH + AH2 + 2 S-adenosyl-L-methionine = 3-methylsulfanyl-L-aspartate(89)-[ribosomal protein uS12]-hydrogen + (sulfur carrier)-H + 5'-deoxyadenosine + L-methionine + A + S-adenosyl-L-homocysteine + 2 H(+). Catalyzes the methylthiolation of an aspartic acid residue of ribosomal protein uS12. The sequence is that of Ribosomal protein uS12 methylthiotransferase RimO from Hydrogenobaculum sp. (strain Y04AAS1).